Reading from the N-terminus, the 454-residue chain is uncharacterized protein (454 aa).

The 42-residue stretch at 364–405 (CSRPGCDAPAYHSEVHHVTPWTTTHRTDINDLTLACGPDNRL) folds into the HNH domain.

It belongs to the Rv1128c/1148c/1588c/1702c/1945/3466 family.

This is an uncharacterized protein from Mycobacterium tuberculosis (strain CDC 1551 / Oshkosh).